The chain runs to 370 residues: Phosphoserine aminotransferase (370 aa).

The residue at position 1 (Met-1) is an N-acetylmethionine. The O-phospho-L-serine site is built by His-44 and Arg-45. N6-acetyllysine is present on Lys-51. Residues Gly-79, Cys-80, and Trp-107 each coordinate pyridoxal 5'-phosphate. Lys-127 is modified (N6-acetyllysine). Positions 156, 176, and 199 each coordinate pyridoxal 5'-phosphate. At Lys-200 the chain carries N6-(pyridoxal phosphate)lysine. Residues Asn-241 and Thr-242 each coordinate pyridoxal 5'-phosphate. Lys-269, Lys-318, and Lys-323 each carry N6-acetyllysine. At Ser-331 the chain carries Phosphoserine. Lys-333 carries the N6-acetyllysine modification. Positions 335, 336, and 342 each coordinate O-phospho-L-serine.

This sequence belongs to the class-V pyridoxal-phosphate-dependent aminotransferase family. SerC subfamily. In terms of assembly, homodimer. Pyridoxal 5'-phosphate serves as cofactor.

It catalyses the reaction O-phospho-L-serine + 2-oxoglutarate = 3-phosphooxypyruvate + L-glutamate. The protein operates within amino-acid biosynthesis; L-serine biosynthesis; L-serine from 3-phospho-D-glycerate: step 2/3. Functionally, involved in L-serine biosynthesis via the phosphorylated pathway, a three-step pathway converting the glycolytic intermediate 3-phospho-D-glycerate into L-serine. Catalyzes the second step, that is the pyridoxal 5'-phosphate-dependent transamination of 3-phosphohydroxypyruvate and L-glutamate to O-phosphoserine (OPS) and alpha-ketoglutarate. The chain is Phosphoserine aminotransferase (PSAT1) from Oryctolagus cuniculus (Rabbit).